The following is an 802-amino-acid chain: MPEITAFPQPKSDLSILLLGAGGREHALAFKLAQSSRVARIVVCPGNGGTALMGGKVSNLALPWGAPPAFRSIVEWAQKENIDLVVPGPEQPLVDGVEGAFKKVGIPVFGPSPAAAMLEGSKSLSKEFMARHNIPTAAFRSFTSTQYEDAVAYIKSKPFTSGRSVIKASGLAAGKGVLIPETDEEAFAALKSVMVDKEFGDAGDEVVVEEYLSGPEISVLAFSDGYTIVPMPAAQDHKRIGEGDTGLNTGGMGAYAPAPIATKEIMERCVKDVLEPTIKGMREDGYPFVGMLFTGFMITADGPRVLEYNVRFGDPETQALMLLLDEQTDLAEVLLACVERRLDSIKLGYKQGYAVSVVLASEGYPGSYPKGLPMTLNPTPEGVEVFHAGTKRSDNVTVTDGGRVLAVCASAPTLRAAVDLAYSGISQISFQGQTFRRDIAYRALSSEPPAEPKGLTYAAAGVSVDAGNDLVEAIKPVVKATRRPGADSDIGGFGGAFDLAKAGYKDPILVSGTDGVGTKLRVALDHGKHNTVGIDLVAMSVNDLIVQGAEPLYFLDYYACSKLDVPVAADVITGIAEGCLQAGCALIGGETAEMPGMYHGDDYDLAGFAVGVVERAQILPTPDIASGDVLLALSSSGPHSNGFSLIRKIVSLSNLSLHDTAPWDKNTSVGDALLTPTKVYIKPLLPGIKSGLYKGMSHITGGGFTENIPRIFSSASNLGVKLDLTSYSLPAIWKWLMRAGNVEAKEMVRTFNCGVGMIIIVAKDKADAALSSLKENGEEAWVIGEVQEKKGVEYVGLDKFGL.

The GARS stretch occupies residues 1–444 (MPEITAFPQP…FRRDIAYRAL (444 aa)). The region spanning 126 to 339 (KEFMARHNIP…LAEVLLACVE (214 aa)) is the ATP-grasp domain. 157-218 (KPFTSGRSVI…EEYLSGPEIS (62 aa)) contacts ATP. The Mg(2+) site is built by E307 and N309. Positions 455–788 (LTYAAAGVSV…EAWVIGEVQE (334 aa)) are AIRS.

This sequence in the N-terminal section; belongs to the GARS family. The protein in the C-terminal section; belongs to the AIR synthase family. In terms of assembly, homodimer. Requires Mg(2+) as cofactor. Mn(2+) is required as a cofactor.

It localises to the cytoplasm. The protein resides in the cytosol. It catalyses the reaction 2-formamido-N(1)-(5-O-phospho-beta-D-ribosyl)acetamidine + ATP = 5-amino-1-(5-phospho-beta-D-ribosyl)imidazole + ADP + phosphate + H(+). The enzyme catalyses 5-phospho-beta-D-ribosylamine + glycine + ATP = N(1)-(5-phospho-beta-D-ribosyl)glycinamide + ADP + phosphate + H(+). The protein operates within purine metabolism; IMP biosynthesis via de novo pathway; 5-amino-1-(5-phospho-D-ribosyl)imidazole from N(2)-formyl-N(1)-(5-phospho-D-ribosyl)glycinamide: step 2/2. It functions in the pathway purine metabolism; IMP biosynthesis via de novo pathway; N(1)-(5-phospho-D-ribosyl)glycinamide from 5-phospho-alpha-D-ribose 1-diphosphate: step 2/2. Functionally, catalyzes the second and fifth step in the 'de novo' purine biosynthesis pathway; contains phosphoribosylamine--glycine ligase (GARS) and phosphoribosylformylglycinamidine cyclo-ligase (AIRS) activities. The protein is Bifunctional purine biosynthetic protein ADE5,7 of Cryptococcus neoformans var. grubii serotype A (strain H99 / ATCC 208821 / CBS 10515 / FGSC 9487) (Filobasidiella neoformans var. grubii).